We begin with the raw amino-acid sequence, 156 residues long: Transcriptional repressor NrdR (156 aa).

A zinc finger lies at 3 to 34 (CPFCGNIDTQVKDSRPAEDHVSIRRRRFCPAC). Residues 49–139 (LVVIKTSGKR…VYKNFQAADD (91 aa)) enclose the ATP-cone domain.

It belongs to the NrdR family. Zn(2+) serves as cofactor.

In terms of biological role, negatively regulates transcription of bacterial ribonucleotide reductase nrd genes and operons by binding to NrdR-boxes. The polypeptide is Transcriptional repressor NrdR (Ruegeria pomeroyi (strain ATCC 700808 / DSM 15171 / DSS-3) (Silicibacter pomeroyi)).